Reading from the N-terminus, the 226-residue chain is V-type proton ATPase subunit E (226 aa).

The protein belongs to the V-ATPase E subunit family. As to quaternary structure, V-ATPase is a heteromultimeric enzyme made up of two complexes: the ATP-hydrolytic V1 complex and the proton translocation V0 complex. The V1 complex consists of three catalytic AB heterodimers that form a heterohexamer, three peripheral stalks each consisting of EG heterodimers, one central rotor including subunits D and F, and the regulatory subunits C and H. The proton translocation complex V0 consists of the proton transport subunit a, a ring of proteolipid subunits c9c'', rotary subunit d, subunits e and f, and the accessory subunits VhaAC45 and ATP6AP2.

In terms of biological role, subunit of the V1 complex of vacuolar(H+)-ATPase (V-ATPase), a multisubunit enzyme composed of a peripheral complex (V1) that hydrolyzes ATP and a membrane integral complex (V0) that translocates protons. V-ATPase is responsible for acidifying and maintaining the pH of intracellular compartments and in some cell types, is targeted to the plasma membrane, where it is responsible for acidifying the extracellular environment. In Manduca sexta (Tobacco hawkmoth), this protein is V-type proton ATPase subunit E (VHA26).